A 335-amino-acid chain; its full sequence is DNA-directed RNA polymerase RPB7 homolog (335 aa).

This sequence belongs to the Asfivirus DNA-directed RNA polymerase RPB7 homolog family. In terms of assembly, part of the viral DNA-directed RNA polymerase that consists of 8 polII-like subunits (RPB1, RPB2, RPB3, RPB5, RPB6, RPB7, RPB9, RPB10), a capping enzyme and a termination factor.

Its subcellular location is the host cytoplasm. The protein resides in the virion. Functionally, component of the DNA-directed RNA polymerase (RNAP) that catalyzes the transcription in the cytoplasm of viral DNA into RNA using the four ribonucleoside triphosphates as substrates. This African swine fever virus (isolate Pig/Kenya/KEN-50/1950) (ASFV) protein is DNA-directed RNA polymerase RPB7 homolog.